Consider the following 153-residue polypeptide: Selenoprotein F (153 aa).

An N-terminal signal peptide occupies residues 1–19; it reads MAGEVYLLWLLPLLQGLAS. Residue selenocysteine 84 is a non-standard amino acid, selenocysteine.

It belongs to the selenoprotein M/F family. In terms of tissue distribution, higher levels in polster, prechordal plate, axis, otic vesicle and somites. Lower levels in fin buds.

It localises to the endoplasmic reticulum lumen. Functionally, may be involved in redox reactions associated with the formation of disulfide bonds. May contribute to the quality control of protein folding in the endoplasmic reticulum. The polypeptide is Selenoprotein F (Danio rerio (Zebrafish)).